The sequence spans 662 residues: DNA ligase (662 aa).

NAD(+)-binding positions include 34 to 38 (DYEYD), 83 to 84 (SI), and glutamate 113. The active-site N6-AMP-lysine intermediate is lysine 115. Arginine 136, glutamate 172, lysine 286, and lysine 310 together coordinate NAD(+). Positions 404, 407, 422, and 427 each coordinate Zn(2+). The 80-residue stretch at 583–662 (KSGSTCFGKA…EAFTNLIHLE (80 aa)) folds into the BRCT domain.

Belongs to the NAD-dependent DNA ligase family. LigA subfamily. Mg(2+) serves as cofactor. Requires Mn(2+) as cofactor.

It catalyses the reaction NAD(+) + (deoxyribonucleotide)n-3'-hydroxyl + 5'-phospho-(deoxyribonucleotide)m = (deoxyribonucleotide)n+m + AMP + beta-nicotinamide D-nucleotide.. DNA ligase that catalyzes the formation of phosphodiester linkages between 5'-phosphoryl and 3'-hydroxyl groups in double-stranded DNA using NAD as a coenzyme and as the energy source for the reaction. It is essential for DNA replication and repair of damaged DNA. The protein is DNA ligase of Chlamydia pneumoniae (Chlamydophila pneumoniae).